The sequence spans 602 residues: MHKYRTHNCNELQISDVETEVKLSGWVHRRRDHGNLVFIDLRDHYGITQIVFTDQNPQLMEDASRLRYESVITVRGTVVARSEDTINNTLPTGHVEVLAVEFSVESAADTLPFVINTEKDAPEESRFKHRFLDLRREKLHNNIILRSQIISHIRHLMTASGFTEFQTPILTASSPEGARDFLVPSRMHPGKFYALPQAPQQFKQLLMVSGFDRYFQIAPCFRDEDARADRSPGEFYQLDVEMSFVTQEDVFSTIEPVMYDLFTKFTDKKVSETPFVCIPYNESMLKYGSDKPDLRNPIIIADVTEIFRDSDFTIFRENIKKGSIVRAIPAPKAAALPRSFFDKMIEFAVSEGAGGLGYIQFSETGEAKGPVVKFLSPQQLESLKATASISNGDAVFFASDKKEKAAKLAGKVRIRLGEELDLLEKDCFKFCWITDFPFYELNEETGKIDFSHNPFSMPQGGIDALEQAKTTEELLELTAYQYDIVCNGIELSSGAIRNHKPEIMYKAFSIAGYSEEEVDKRFGGMIRAFKFGAPPHGGIAPGIDRIVMLLAEATNIREIIAFPLNQQAEDLLMNAPSYVEDKALKELSIMLSPSARKNAEKE.

Glutamate 176 provides a ligand contact to L-aspartate. The tract at residues 200–203 (QQFK) is aspartate. The L-aspartate site is built by arginine 222 and histidine 452. 222–224 (RDE) is a binding site for ATP. Glutamate 490 serves as a coordination point for ATP. Arginine 497 is an L-aspartate binding site. ATP is bound at residue 542–545 (GIDR).

It belongs to the class-II aminoacyl-tRNA synthetase family. Type 1 subfamily. Homodimer.

The protein localises to the cytoplasm. It carries out the reaction tRNA(Asx) + L-aspartate + ATP = L-aspartyl-tRNA(Asx) + AMP + diphosphate. Functionally, aspartyl-tRNA synthetase with relaxed tRNA specificity since it is able to aspartylate not only its cognate tRNA(Asp) but also tRNA(Asn). Reaction proceeds in two steps: L-aspartate is first activated by ATP to form Asp-AMP and then transferred to the acceptor end of tRNA(Asp/Asn). This is Aspartate--tRNA(Asp/Asn) ligase from Rickettsia africae (strain ESF-5).